The chain runs to 449 residues: AP-4 complex subunit mu-1 (449 aa).

An MHD domain is found at 184–448; sequence KNEVFLDVVE…LSHSNAYVIR (265 aa).

The protein belongs to the adaptor complexes medium subunit family. As to quaternary structure, adaptor protein complex 4 (AP-4) is a heterotetramer composed of two large adaptins (epsilon-type subunit AP4E1 and beta-type subunit AP4B1), a medium adaptin (mu-type subunit AP4M1) and a small adaptin (sigma-type AP4S1). Interacts with tyrosine-based sorting signals on the cytoplasmic tail of cargo proteins such as APP, ATG9A, LAMP2 and NAGPA. Interacts with the C-terminal domain of GRID2. Interacts with GRIA1 and GRIA2; the interaction is indirect via CACNG3. Interacts with CACNG3; CACNG3 associates GRIA1 and GRIA2 with the adaptor protein complex 4 (AP-4) to target them to the somatodendritic compartment of neurons. Interacts with HOOK1 and HOOK2; the interactions are direct, mediate the interaction between FTS-Hook-FHIP (FHF) complex and AP-4 and the perinuclear distribution of AP-4.

Its subcellular location is the golgi apparatus. The protein localises to the trans-Golgi network membrane. The protein resides in the early endosome. Component of the adaptor protein complex 4 (AP-4). Adaptor protein complexes are vesicle coat components involved both in vesicle formation and cargo selection. They control the vesicular transport of proteins in different trafficking pathways. AP-4 forms a non clathrin-associated coat on vesicles departing the trans-Golgi network (TGN) and may be involved in the targeting of proteins from the trans-Golgi network (TGN) to the endosomal-lysosomal system. It is also involved in protein sorting to the basolateral membrane in epithelial cells and the proper asymmetric localization of somatodendritic proteins in neurons. Within AP-4, the mu-type subunit AP4M1 is directly involved in the recognition and binding of tyrosine-based sorting signals found in the cytoplasmic part of cargos. The adaptor protein complex 4 (AP-4) may also recognize other types of sorting signal. This is AP-4 complex subunit mu-1 from Mus musculus (Mouse).